A 550-amino-acid polypeptide reads, in one-letter code: Chaperonin GroEL 2 (550 aa).

Residues 30–33 (TLGP), K51, 87–91 (DGTTT), G415, 480–482 (NAA), and D496 contribute to the ATP site.

Belongs to the chaperonin (HSP60) family. In terms of assembly, forms a cylinder of 14 subunits composed of two heptameric rings stacked back-to-back. Interacts with the co-chaperonin GroES.

It localises to the cytoplasm. It carries out the reaction ATP + H2O + a folded polypeptide = ADP + phosphate + an unfolded polypeptide.. In terms of biological role, together with its co-chaperonin GroES, plays an essential role in assisting protein folding. The GroEL-GroES system forms a nano-cage that allows encapsulation of the non-native substrate proteins and provides a physical environment optimized to promote and accelerate protein folding. The polypeptide is Chaperonin GroEL 2 (Erythrobacter litoralis (strain HTCC2594)).